A 392-amino-acid chain; its full sequence is NAD(P)H-quinone oxidoreductase subunit H, chloroplastic (392 aa).

It belongs to the complex I 49 kDa subunit family. In terms of assembly, NDH is composed of at least 16 different subunits, 5 of which are encoded in the nucleus.

The protein resides in the plastid. The protein localises to the chloroplast thylakoid membrane. It catalyses the reaction a plastoquinone + NADH + (n+1) H(+)(in) = a plastoquinol + NAD(+) + n H(+)(out). The enzyme catalyses a plastoquinone + NADPH + (n+1) H(+)(in) = a plastoquinol + NADP(+) + n H(+)(out). NDH shuttles electrons from NAD(P)H:plastoquinone, via FMN and iron-sulfur (Fe-S) centers, to quinones in the photosynthetic chain and possibly in a chloroplast respiratory chain. The immediate electron acceptor for the enzyme in this species is believed to be plastoquinone. Couples the redox reaction to proton translocation, and thus conserves the redox energy in a proton gradient. This is NAD(P)H-quinone oxidoreductase subunit H, chloroplastic from Marchantia polymorpha (Common liverwort).